The chain runs to 425 residues: Enolase (425 aa).

Residue glutamine 163 participates in (2R)-2-phosphoglycerate binding. Glutamate 205 functions as the Proton donor in the catalytic mechanism. 3 residues coordinate Mg(2+): aspartate 242, glutamate 286, and aspartate 313. The (2R)-2-phosphoglycerate site is built by lysine 338, arginine 367, serine 368, and lysine 389. Lysine 338 acts as the Proton acceptor in catalysis.

The protein belongs to the enolase family. Mg(2+) is required as a cofactor.

The protein resides in the cytoplasm. Its subcellular location is the secreted. It localises to the cell surface. The catalysed reaction is (2R)-2-phosphoglycerate = phosphoenolpyruvate + H2O. It participates in carbohydrate degradation; glycolysis; pyruvate from D-glyceraldehyde 3-phosphate: step 4/5. Catalyzes the reversible conversion of 2-phosphoglycerate (2-PG) into phosphoenolpyruvate (PEP). It is essential for the degradation of carbohydrates via glycolysis. The protein is Enolase of Helicobacter hepaticus (strain ATCC 51449 / 3B1).